Consider the following 30-residue polypeptide: Brevinin-2Rj (30 aa).

Cysteines 24 and 30 form a disulfide.

In terms of tissue distribution, expressed by the skin glands.

It is found in the secreted. Antimicrobial peptide. In Pelophylax ridibundus (Marsh frog), this protein is Brevinin-2Rj.